Here is a 549-residue protein sequence, read N- to C-terminus: FMRFamide receptor (549 aa).

At 1–117 the chain is on the extracellular side; that stretch reads MSGTAVARLL…NNRIEFWVCG (117 aa). Residues Asn-59, Asn-70, and Asn-93 are each glycosylated (N-linked (GlcNAc...) asparagine). A helical membrane pass occupies residues 118-138; that stretch reads VLINIVGVLGILGNIISMIIL. Topologically, residues 139–158 are cytoplasmic; the sequence is SRPQMRSSINYLLTGLARCD. Residues 159 to 179 traverse the membrane as a helical segment; that stretch reads TVLIITSILLFGIPSIYPYTG. The Extracellular portion of the chain corresponds to 180–181; it reads HF. The helical transmembrane segment at 182–202 threads the bilayer; it reads FGYYNYVYPFISPAVFPIGMI. Residues 203-238 lie on the Cytoplasmic side of the membrane; it reads AQTASIYMTFTVTLERYVAVCHPLKARALCTYGRAK. The helical transmembrane segment at 239-259 threads the bilayer; sequence IYFIVCVCFSLAYNMPRFWEV. Residues 260–289 lie on the Extracellular side of the membrane; sequence LTVTYPEPGKDVILHCVRPSRLRRSETYIN. Residues 290–310 traverse the membrane as a helical segment; that stretch reads IYIHWCYLIVNYIIPFLTLAI. Topologically, residues 311–341 are cytoplasmic; it reads LNCLIYRQVKRANRERQRLSRSEKREIGLAT. The chain crosses the membrane as a helical span at residues 342–362; that stretch reads MLLCVVIVFFMLNFLPLVLNI. Residues 363–376 are Extracellular-facing; it reads SEAFYSTIDHKITK. A helical membrane pass occupies residues 377-397; it reads ISNLLITINSSVNFLIYIIFG. Topologically, residues 398–549 are cytoplasmic; that stretch reads EKFKRIFLLI…KKLGHVSSGF (152 aa).

The protein belongs to the G-protein coupled receptor 1 family. In terms of tissue distribution, expressed in ovaries, heads and bodies. Expressed in dopaminergic neurons.

The protein localises to the cell membrane. Functionally, a receptor for the FMRFamide peptides. Reacts with high affinity to FMRFamide and intrinsic FMRFamide-related peptides. By stimulating intracellular calcium signaling through the inositol 1,4,5-trisphosphate receptor, Itpr, in dopaminergic neurons, may be involved in the maintenance of neuronal excitability and in the regulation of flight bout duration. The sequence is that of FMRFamide receptor from Drosophila melanogaster (Fruit fly).